Reading from the N-terminus, the 98-residue chain is C-X-C motif chemokine 10 (98 aa).

A signal peptide spans 1–21; that stretch reads MNQTAILICCLVFLTLSGIQG. Arginine 26 bears the Citrulline mark. Disulfide bonds link cysteine 30–cysteine 57 and cysteine 32–cysteine 74.

This sequence belongs to the intercrine alpha (chemokine CxC) family.

It is found in the secreted. Its function is as follows. Chemotactic for monocytes and T-lymphocytes. Binds to CXCR3. The chain is C-X-C motif chemokine 10 (CXCL10) from Macaca mulatta (Rhesus macaque).